Consider the following 647-residue polypeptide: MANREGTDGDGSGCNGWFLVQAIVDKQTGDTVSEDEDENATDTGSDLADFIDDSTDICVQAERETAQVLLHMQEAQRDAQAVRALKRKYTDSSGDTRPYGKKVGRNTRGTLQEISLNVSSTQATQTVYSVPDSGYGNMEVETAEVEEVTVATNTNGDAEGEHGGSVREECSSVDSAIDSENQDPKSPTAQIKLLLQSNNKKAAMLTQFKETYGLSFTDLVRTFKSDKTTCTDWVAAIFGVHPTIAEGFKTLINKYALYTHIQSLDTKQGVLILMLIRYTCGKNRVTVGKGLSTLLHVPESCMLLEPPKLRSPVAALYWYRTGISNISVVTGDTPEWIQRLTVIQHGIDDSVFDLSDMVQWAFDNEYTDESDIAFNYAMLADCNSNAAAFLKSNCQAKYVKDCATMCKHYKRAQKRQMSMSQWIKFRCSKCDEGGDWRPIVQFLRYQGIEFISFLCALKEFLKGTPKKNCIVIYGPANTGKSHFCMSLMHFLQGTVISYVNSTSHFWLEPLADAKLAMLDDATGTCWSYFDNYMRNALDGYAISLDRKYKSLLQMKCPPLLITSNTNPVEDDRWPYLRSRLTVFKFPNAFPFDQNRNPVYTINDKNWKCFFEKTWCRLDLQQDEDEGDNDENTFTTFKCVTGQNTRIL.

The Nuclear localization signal signature appears at 86 to 88 (KRK). The residue at position 92 (Ser92) is a Phosphoserine; by host. Residues 154–186 (TNGDAEGEHGGSVREECSSVDSAIDSENQDPKS) are disordered. The segment covering 159–170 (EGEHGGSVREEC) has biased composition (basic and acidic residues). The segment at 183–349 (DPKSPTAQIK…LTVIQHGIDD (167 aa)) is DNA-binding region. The 151-residue stretch at 448 to 598 (IEFISFLCAL…FPFDQNRNPV (151 aa)) folds into the SF3 helicase domain. Residue 474 to 481 (GPANTGKS) participates in ATP binding. A Glycyl lysine isopeptide (Lys-Gly) (interchain with G-Cter in SUMO) cross-link involves residue Lys555.

Belongs to the papillomaviridae E1 protein family. In terms of assembly, can form hexamers. Interacts with E2 protein; this interaction increases E1 DNA binding specificity. Interacts with host DNA polymerase subunit POLA2. Interacts with host single stranded DNA-binding protein RPA1. Interacts with host TOP1; this interaction stimulates the enzymatic activity of TOP1. In terms of processing, phosphorylated. Post-translationally, sumoylated.

It is found in the host nucleus. It catalyses the reaction Couples ATP hydrolysis with the unwinding of duplex DNA by translocating in the 3'-5' direction.. It carries out the reaction ATP + H2O = ADP + phosphate + H(+). Its function is as follows. ATP-dependent DNA 3'-5' helicase required for initiation of viral DNA replication. It forms a complex with the viral E2 protein. The E1-E2 complex binds to the replication origin which contains binding sites for both proteins. During the initial step, a dimer of E1 interacts with a dimer of protein E2 leading to a complex that binds the viral origin of replication with high specificity. Then, a second dimer of E1 displaces the E2 dimer in an ATP-dependent manner to form the E1 tetramer. Following this, two E1 monomers are added to each half of the site, which results in the formation of two E1 trimers on the viral ori. Subsequently, two hexamers will be created. The double hexamer acts as a bi-directional helicase machinery and unwinds the viral DNA and then recruits the host DNA polymerase to start replication. The protein is Replication protein E1 of Human papillomavirus 39.